Reading from the N-terminus, the 505-residue chain is tRNA-2-methylthio-N(6)-dimethylallyladenosine synthase (505 aa).

Residues 14–132 (RTYEVRTYGC…LPVLLERARV (119 aa)) enclose the MTTase N-terminal domain. The [4Fe-4S] cluster site is built by Cys23, Cys61, Cys95, Cys169, Cys173, and Cys176. Residues 155 to 386 (RESAYAAWVS…ALQEEISWEE (232 aa)) enclose the Radical SAM core domain. The 69-residue stretch at 388-456 (KKQVGRTLEL…PHHLLAEGPV (69 aa)) folds into the TRAM domain.

It belongs to the methylthiotransferase family. MiaB subfamily. Monomer. The cofactor is [4Fe-4S] cluster.

It is found in the cytoplasm. It catalyses the reaction N(6)-dimethylallyladenosine(37) in tRNA + (sulfur carrier)-SH + AH2 + 2 S-adenosyl-L-methionine = 2-methylsulfanyl-N(6)-dimethylallyladenosine(37) in tRNA + (sulfur carrier)-H + 5'-deoxyadenosine + L-methionine + A + S-adenosyl-L-homocysteine + 2 H(+). Functionally, catalyzes the methylthiolation of N6-(dimethylallyl)adenosine (i(6)A), leading to the formation of 2-methylthio-N6-(dimethylallyl)adenosine (ms(2)i(6)A) at position 37 in tRNAs that read codons beginning with uridine. This Streptomyces viridosporus (strain ATCC 14672 / DSM 40746 / JCM 4963 / KCTC 9882 / NRRL B-12104 / FH 1290) (Streptomyces ghanaensis) protein is tRNA-2-methylthio-N(6)-dimethylallyladenosine synthase.